Here is a 293-residue protein sequence, read N- to C-terminus: Protease HtpX homolog (293 aa).

Helical transmembrane passes span 6–26 (VAVMLAAMTGLFLAVGYLIGG) and 28–48 (SGMVIAFLVAGGMNLFAYWNS). His130 contributes to the Zn(2+) binding site. Glu131 is an active-site residue. Residue His134 coordinates Zn(2+). 2 helical membrane-spanning segments follow: residues 145–165 (LTATLAGAISMLANFAFFFGG) and 172–192 (PLGAVGMIVMMILAPLAAMMV). Residue Glu201 coordinates Zn(2+).

The protein belongs to the peptidase M48B family. Zn(2+) is required as a cofactor.

Its subcellular location is the cell inner membrane. This Rhodospirillum rubrum (strain ATCC 11170 / ATH 1.1.1 / DSM 467 / LMG 4362 / NCIMB 8255 / S1) protein is Protease HtpX homolog.